The primary structure comprises 489 residues: Carboxyl-terminal-processing peptidase 1, chloroplastic (489 aa).

Low complexity predominate over residues 1-20; sequence MRLLLPFSSPLSATSSPSTP. Residues 1–27 form a disordered region; that stretch reads MRLLLPFSSPLSATSSPSTPQFIPELP. The region spanning 189-273 is the PDZ domain; sequence FSRMSKYDIT…TFVVLKVKHG (85 aa). Catalysis depends on charge relay system residues Ser-403 and Lys-428.

It belongs to the peptidase S41A family.

Its subcellular location is the plastid. The protein localises to the chloroplast thylakoid lumen. The catalysed reaction is The enzyme shows specific recognition of a C-terminal tripeptide, Xaa-Yaa-Zaa, in which Xaa is preferably Ala or Leu, Yaa is preferably Ala or Tyr, and Zaa is preferably Ala, but then cleaves at a variable distance from the C-terminus. A typical cleavage is -Ala-Ala-|-Arg-Ala-Ala-Lys-Glu-Asn-Tyr-Ala-Leu-Ala-Ala.. In terms of biological role, protease involved in the C-terminal processing of the chloroplastic D1 protein of photosystem II. This proteolytic processing is necessary to allow the light-driven assembly of the tetranuclear manganese cluster, which is responsible for photosynthetic water oxidation. The polypeptide is Carboxyl-terminal-processing peptidase 1, chloroplastic (CTPA1) (Arabidopsis thaliana (Mouse-ear cress)).